The following is a 711-amino-acid chain: Angiogenic factor with G patch and FHA domains 1 (711 aa).

Positions 1–19 are enriched in pro residues; that stretch reads MASEAPSPPSPSPPPPASP. Disordered regions lie at residues 1–23, 137–184, 260–297, and 311–400; these read MASE…EPEL, ALDP…EGPA, PYQT…SEDQ, and EHSG…EDEE. Ala2 carries the N-acetylalanine modification. 2 positions are modified to phosphoserine: Ser7 and Ser12. A coiled-coil region spans residues 19-85; sequence PEPELAQLRR…SKILHCGKNE (67 aa). The segment covering 167–176 has biased composition (polar residues); the sequence is AVTSDSQESV. Positions 270–279 are enriched in basic residues; sequence RERRLKKRRK. Residues 287–297 are compositionally biased toward basic and acidic residues; that stretch reads NEEKDLSSEDQ. Position 344 is a phosphoserine (Ser344). Over residues 361–370 the composition is skewed to acidic residues; it reads SESEPEEGEI. Residues 374 to 391 are compositionally biased toward basic and acidic residues; sequence QSEKSYDGDSSSGDRETS. The region spanning 431-484 is the FHA domain; the sequence is ATIGREKDMEHTVRIPEVAVSKFHAEVYFDHDLQSYVLVDQGSQNGTIVNGKQI. Basic and acidic residues-rich tracts occupy residues 579 to 606 and 613 to 623; these read LKNP…RDDA and EITDSNKGRKM. Residues 579–623 are disordered; sequence LKNPKYKDRAGKRREQVGSEGTFQRDDAPASVHSEITDSNKGRKM. One can recognise a G-patch domain in the interval 616 to 662; it reads DSNKGRKMLEKMGWKRGEGLGKDGGGMKTPIQLQLRRTHAGLGTGKL. Position 661 is an N6-acetyllysine (Lys661). The segment covering 690 to 699 has biased composition (basic and acidic residues); sequence FTENKPRKET. The disordered stretch occupies residues 690 to 711; the sequence is FTENKPRKETPGAVPWVTGTAE.

In terms of assembly, interacts with the secreted angiogenic factor TNFSF12.

The protein localises to the cytoplasm. It localises to the secreted. In terms of biological role, promotes angiogenesis and the proliferation of endothelial cells. Able to bind to endothelial cells and promote cell proliferation, suggesting that it may act in an autocrine fashion. The polypeptide is Angiogenic factor with G patch and FHA domains 1 (Aggf1) (Mus musculus (Mouse)).